Reading from the N-terminus, the 89-residue chain is Large ribosomal subunit protein bL27 (89 aa).

Residues 1–21 (MAHKKAGGSSRNGRDSAGRRL) form a disordered region.

The protein belongs to the bacterial ribosomal protein bL27 family.

The polypeptide is Large ribosomal subunit protein bL27 (Roseobacter denitrificans (strain ATCC 33942 / OCh 114) (Erythrobacter sp. (strain OCh 114))).